The primary structure comprises 137 residues: Putative transcriptional regulatory protein MJ0173 (137 aa).

The protein belongs to the Tfx family.

Its function is as follows. Putative transcriptional regulator. In Methanocaldococcus jannaschii (strain ATCC 43067 / DSM 2661 / JAL-1 / JCM 10045 / NBRC 100440) (Methanococcus jannaschii), this protein is Putative transcriptional regulatory protein MJ0173.